A 448-amino-acid chain; its full sequence is MREILHIQGGQCGNQIGAKFWEVVCAEHGIDSTGRYEGDNVLQLERVNVYYNEASCGRFVPRAVLMDLEPGTMDSLRSGTYGQIFRPDNFVFGQSGAGNNWAKGHYTEGAELIDSVLDVVRKEAENCDCLQGFQVCHSLGGGTGSGMGTLLISKIREEYPDRMMLTFSVFPSPKVSDTVVEPYNATLSVHQLVENADECMVLDNEALYDICFRTLKLTTPSFGDLNHLISATMSGVTCCLRFPGQLNSDLRKLAVNLIPFPRLHFFMVGFAPLTSRGSQQYRALTVPELTQQMWDAKNMMCAADPRHGRYLTASAMFRGKMSTKEVDEQMINVQNKNSSYFVEWIPNNVKSTVCDIPPTGLKMASTFIGNSTSIQEMFRRVSEQFTAMFRRKAFLHWYTGEGMDEMEFTEAESNMNDLVSEYQQYQDATADEDGYEYEDEEEVGEEDA.

The GTP site is built by Q11, E69, S138, G142, T143, G144, N204, and N226. Position 69 (E69) interacts with Mg(2+). The disordered stretch occupies residues 429–448 (TADEDGYEYEDEEEVGEEDA).

Belongs to the tubulin family. Dimer of alpha and beta chains. A typical microtubule is a hollow water-filled tube with an outer diameter of 25 nm and an inner diameter of 15 nM. Alpha-beta heterodimers associate head-to-tail to form protofilaments running lengthwise along the microtubule wall with the beta-tubulin subunit facing the microtubule plus end conferring a structural polarity. Microtubules usually have 13 protofilaments but different protofilament numbers can be found in some organisms and specialized cells. Mg(2+) serves as cofactor.

The protein localises to the cytoplasm. It is found in the cytoskeleton. Its function is as follows. Tubulin is the major constituent of microtubules, a cylinder consisting of laterally associated linear protofilaments composed of alpha- and beta-tubulin heterodimers. Microtubules grow by the addition of GTP-tubulin dimers to the microtubule end, where a stabilizing cap forms. Below the cap, tubulin dimers are in GDP-bound state, owing to GTPase activity of alpha-tubulin. The chain is Tubulin beta-2 chain (TUBB2) from Lupinus albus (White lupine).